The primary structure comprises 199 residues: Photosystem I reaction center subunit XI (199 aa).

2 consecutive transmembrane segments (helical) span residues I108–L128 and F165–L185.

Belongs to the PsaL family.

It localises to the cellular thylakoid membrane. This chain is Photosystem I reaction center subunit XI, found in Prochlorococcus marinus (strain MIT 9515).